Consider the following 291-residue polypeptide: Serine hydrolase BPHL (291 aa).

Residues 1–37 (MATATVRPAAQRLRLLLSPLKSRICVPQAEPVATFGT) form the signal peptide. The AB hydrolase-1 domain maps to 62–173 (AILLLPGMLG…ANAYVTEEDS (112 aa)). K74 bears the N6-acetyllysine; alternate mark. An N6-succinyllysine; alternate modification is found at K74. An N6-acetyllysine mark is found at K86 and K119. K126 carries the N6-acetyllysine; alternate modification. K126 carries the N6-succinyllysine; alternate modification. The Nucleophile role is filled by S139. K184 carries the N6-succinyllysine modification. At K191 the chain carries N6-acetyllysine; alternate. K191 carries the post-translational modification N6-succinyllysine; alternate. K217 bears the N6-acetyllysine mark. E221 contributes to the Mg(2+) binding site. K243 carries the N6-acetyllysine modification. The Charge relay system role is filled by D244. N6-acetyllysine; alternate occurs at positions 260 and 271. N6-succinyllysine; alternate occurs at positions 260 and 271. Residue H272 is the Charge relay system of the active site.

This sequence belongs to the AB hydrolase superfamily. Lipase family. Monomer. May also form homodimers.

The protein resides in the mitochondrion. It carries out the reaction L-homocysteine thiolactone + H2O = L-homocysteine + H(+). It catalyses the reaction valacyclovir + H2O = acyclovir + L-valine + H(+). In terms of biological role, specific alpha-amino acid ester serine hydrolase that prefers small, hydrophobic, and aromatic side chains and does not have a stringent requirement for the leaving group other than preferring a primary alcohol. Has homocysteine-thiolactonase activity (in vitro) and may play a significant role in the detoxification of homocysteine thiolactone in vivo. Catalyzes the hydrolytic activation of amino acid ester prodrugs of nucleoside analogs such as valacyclovir and valganciclovir, converting them into their active forms (acyclovir and ganciclovir). The sequence is that of Serine hydrolase BPHL (Bphl) from Mus musculus (Mouse).